We begin with the raw amino-acid sequence, 432 residues long: 3-phosphoshikimate 1-carboxyvinyltransferase (432 aa).

Lysine 23, serine 24, and arginine 28 together coordinate 3-phosphoshikimate. Lysine 23 is a binding site for phosphoenolpyruvate. Residues glycine 95 and arginine 123 each contribute to the phosphoenolpyruvate site. Serine 167, glutamine 169, aspartate 316, and lysine 343 together coordinate 3-phosphoshikimate. Glutamine 169 provides a ligand contact to phosphoenolpyruvate. Catalysis depends on aspartate 316, which acts as the Proton acceptor. Phosphoenolpyruvate-binding residues include arginine 347 and arginine 391.

This sequence belongs to the EPSP synthase family. In terms of assembly, monomer.

The protein localises to the cytoplasm. The enzyme catalyses 3-phosphoshikimate + phosphoenolpyruvate = 5-O-(1-carboxyvinyl)-3-phosphoshikimate + phosphate. Its pathway is metabolic intermediate biosynthesis; chorismate biosynthesis; chorismate from D-erythrose 4-phosphate and phosphoenolpyruvate: step 6/7. Catalyzes the transfer of the enolpyruvyl moiety of phosphoenolpyruvate (PEP) to the 5-hydroxyl of shikimate-3-phosphate (S3P) to produce enolpyruvyl shikimate-3-phosphate and inorganic phosphate. This Limosilactobacillus fermentum (strain NBRC 3956 / LMG 18251) (Lactobacillus fermentum) protein is 3-phosphoshikimate 1-carboxyvinyltransferase.